The chain runs to 682 residues: DNA ligase (682 aa).

Residues 42–46 (DAAYD), 88–89 (SL), and Glu121 contribute to the NAD(+) site. Lys123 (N6-AMP-lysine intermediate) is an active-site residue. The NAD(+) site is built by Arg144, Glu180, Lys291, and Lys315. The Zn(2+) site is built by Cys409, Cys412, Cys427, and Cys433. A BRCT domain is found at 601 to 682 (AAGGALAGKT…FRSLAGLPPG (82 aa)).

Belongs to the NAD-dependent DNA ligase family. LigA subfamily. Mg(2+) is required as a cofactor. Mn(2+) serves as cofactor.

It carries out the reaction NAD(+) + (deoxyribonucleotide)n-3'-hydroxyl + 5'-phospho-(deoxyribonucleotide)m = (deoxyribonucleotide)n+m + AMP + beta-nicotinamide D-nucleotide.. DNA ligase that catalyzes the formation of phosphodiester linkages between 5'-phosphoryl and 3'-hydroxyl groups in double-stranded DNA using NAD as a coenzyme and as the energy source for the reaction. It is essential for DNA replication and repair of damaged DNA. The sequence is that of DNA ligase from Acidiphilium cryptum (strain JF-5).